We begin with the raw amino-acid sequence, 398 residues long: Transposase for insertion sequence element ISRM5 (398 aa).

The protein belongs to the transposase mutator family.

Required for the transposition of the insertion element. This chain is Transposase for insertion sequence element ISRM5, found in Rhizobium meliloti (strain 1021) (Ensifer meliloti).